A 218-amino-acid polypeptide reads, in one-letter code: E3 ubiquitin-protein ligase MARCHF3 (218 aa).

Residues 63–123 (SPFNDRPMCR…ELCHFRFAVE (61 aa)) form an RING-CH-type zinc finger. Zn(2+) contacts are provided by C71, C74, C87, C89, H97, C100, C113, and C116. The next 2 helical transmembrane spans lie at 145-165 (LFGD…SGWL) and 180-200 (LEAV…LFWT).

In terms of assembly, interacts with MARCHF2 and STX6.

It is found in the cytoplasmic vesicle membrane. It localises to the early endosome membrane. It carries out the reaction S-ubiquitinyl-[E2 ubiquitin-conjugating enzyme]-L-cysteine + [acceptor protein]-L-lysine = [E2 ubiquitin-conjugating enzyme]-L-cysteine + N(6)-ubiquitinyl-[acceptor protein]-L-lysine.. The protein operates within protein modification; protein ubiquitination. Functionally, E3 ubiquitin-protein ligase which may be involved in endosomal trafficking. E3 ubiquitin ligases accept ubiquitin from an E2 ubiquitin-conjugating enzyme in the form of a thioester and then directly transfer the ubiquitin to targeted substrates. This is E3 ubiquitin-protein ligase MARCHF3 (Marchf3) from Mus musculus (Mouse).